A 196-amino-acid polypeptide reads, in one-letter code: Adenylate kinase (196 aa).

An ATP-binding site is contributed by G10–T15. The segment at S30–V59 is NMP. Residues T31, R36, G57–V59, G85–R88, and Q92 each bind AMP. An LID region spans residues N126–D142. An ATP-binding site is contributed by R127. AMP is bound by residues R139 and R150. ATP is bound at residue A178.

It belongs to the adenylate kinase family. In terms of assembly, monomer.

The protein localises to the cytoplasm. The catalysed reaction is AMP + ATP = 2 ADP. Its pathway is purine metabolism; AMP biosynthesis via salvage pathway; AMP from ADP: step 1/1. In terms of biological role, catalyzes the reversible transfer of the terminal phosphate group between ATP and AMP. Plays an important role in cellular energy homeostasis and in adenine nucleotide metabolism. In Agrobacterium fabrum (strain C58 / ATCC 33970) (Agrobacterium tumefaciens (strain C58)), this protein is Adenylate kinase.